We begin with the raw amino-acid sequence, 101 residues long: Acylphosphatase (101 aa).

Residues 11–99 (SWLVKAIGRV…PRLNRFDRLP (89 aa)) enclose the Acylphosphatase-like domain. Catalysis depends on residues R26 and N44.

It belongs to the acylphosphatase family.

It catalyses the reaction an acyl phosphate + H2O = a carboxylate + phosphate + H(+). The polypeptide is Acylphosphatase (acyP) (Polaromonas naphthalenivorans (strain CJ2)).